Consider the following 130-residue polypeptide: Small ribosomal subunit protein uS8 (130 aa).

Belongs to the universal ribosomal protein uS8 family. As to quaternary structure, part of the 30S ribosomal subunit.

One of the primary rRNA binding proteins, it binds directly to 16S rRNA central domain where it helps coordinate assembly of the platform of the 30S subunit. The chain is Small ribosomal subunit protein uS8 from Methanocella arvoryzae (strain DSM 22066 / NBRC 105507 / MRE50).